A 93-amino-acid polypeptide reads, in one-letter code: Large ribosomal subunit protein bL31 (93 aa).

The disordered stretch occupies residues 72–93 (VKTVSSNADNQKETTEELIKNK). Positions 81 to 93 (NQKETTEELIKNK) are enriched in basic and acidic residues.

It belongs to the bacterial ribosomal protein bL31 family. Type A subfamily. In terms of assembly, part of the 50S ribosomal subunit.

Functionally, binds the 23S rRNA. The chain is Large ribosomal subunit protein bL31 from Onion yellows phytoplasma (strain OY-M).